The primary structure comprises 207 residues: Peptidyl-prolyl cis-trans isomerase FKBP16-1, chloroplastic (207 aa).

A PPIase FKBP-type domain is found at 104–207; sequence GDLVELNYVC…VFEIQLLKVL (104 aa).

This sequence belongs to the FKBP-type PPIase family.

It is found in the plastid. Its subcellular location is the chloroplast thylakoid lumen. The enzyme catalyses [protein]-peptidylproline (omega=180) = [protein]-peptidylproline (omega=0). Functionally, PPIases accelerate the folding of proteins. It catalyzes the cis-trans isomerization of proline imidic peptide bonds in oligopeptides. This is Peptidyl-prolyl cis-trans isomerase FKBP16-1, chloroplastic (FKBP16-1) from Arabidopsis thaliana (Mouse-ear cress).